A 361-amino-acid polypeptide reads, in one-letter code: 45 kDa calcium-binding protein (361 aa).

A signal peptide spans 1–35 (MVWLVAMTSRQRSLCGLAAHGLWFLGLVLLMDATA). An N-linked (GlcNAc...) asparagine glycan is attached at N39. EF-hand domains lie at 97-132 (RSRR…KTAE) and 136-171 (EAVK…SKGH). S98 carries the phosphoserine modification. Ca(2+) is bound by residues D110, N112, D114, R116, E121, D149, D151, D153, H155, and E160. T192 is modified (phosphothreonine). EF-hand domains follow at residues 196–231 (LGNL…HSRG), 232–267 (MLKF…TVEN), 277–312 (WVKD…MNEY), and 313–348 (NALN…FTGS). D212 contributes to the Ca(2+) binding site. At T216 the chain carries Phosphothreonine. Ca(2+)-binding residues include E219, D245, D247, D249, Q251, and E256. A Phosphothreonine modification is found at T264. D290, N292, and D294 together coordinate Ca(2+). Residue T298 is modified to Phosphothreonine. Residues E301, D326, N328, N330, H332, and E337 each contribute to the Ca(2+) site. Residues 308–361 (PMNEYNALNEAKQMIAIADENQNHHLEPEEILKYSEFFTGSKLMDYARNVHEEF) form a necessary for intracellular retention in Golgi apparatus lumen region.

This sequence belongs to the CREC family. As to quaternary structure, a membrane-associated isoform interacts with STX3 and STXBP1. A membrane-associated isoform is expressed in acini of the pancreas (at protein level). Ubiquitous.

Its subcellular location is the golgi apparatus lumen. Functionally, a membrane-associated isoform may be involved in the exocytosis of zymogens by pancreatic acini. May regulate calcium-dependent activities in the endoplasmic reticulum lumen or post-ER compartment. This chain is 45 kDa calcium-binding protein (Sdf4), found in Rattus norvegicus (Rat).